A 433-amino-acid polypeptide reads, in one-letter code: Protein translocase subunit SecD (433 aa).

6 helical membrane passes run 7–27 (LAFL…GPKI), 257–277 (LIAG…AYRM), 278–298 (AGLI…LTFA), 300–320 (LHVV…GIAV), 354–374 (TIVD…IFGG), and 380–400 (GFAV…VLFA).

It belongs to the SecD/SecF family. SecD subfamily. Forms a complex with SecF. Part of the essential Sec protein translocation apparatus which comprises SecA, SecYEG and auxiliary proteins SecDF. Other proteins may also be involved.

Its subcellular location is the cell membrane. Functionally, part of the Sec protein translocase complex. Interacts with the SecYEG preprotein conducting channel. SecDF uses the proton motive force (PMF) to complete protein translocation after the ATP-dependent function of SecA. In Alicyclobacillus acidocaldarius subsp. acidocaldarius (strain ATCC 27009 / DSM 446 / BCRC 14685 / JCM 5260 / KCTC 1825 / NBRC 15652 / NCIMB 11725 / NRRL B-14509 / 104-IA) (Bacillus acidocaldarius), this protein is Protein translocase subunit SecD.